We begin with the raw amino-acid sequence, 292 residues long: MDPSLLRDRELFKKRALSTPVVEKRAVPSESPSSSSSKKKKAKVEHGGSSGSKQNSDHNNGSFNLKALSGSSGYKFGVLAKIVNYMKTRHQRGDTHPLTLEEILDETQHLDIGLKQKQWLMTEALVNNPKIEVVDGKYAFKPKYNLKDKKALLRLLDNHDQRGLGGILLEDIEEGLPNSQKAVKALGDQILFVSRPDKKKILFFNDKSCQFSVDEEFQKLWRSVTVDSMDEEKIEEYLKRQGISSMQESGPKKVASIQRRKKPASQKKRRFKTHNEHLAGVLKDYSDITPGK.

Residue Met-1 is modified to N-acetylmethionine. Residues 17–64 form a disordered region; that stretch reads LSTPVVEKRAVPSESPSSSSSKKKKAKVEHGGSSGSKQNSDHNNGSFN. Residues 51 to 63 show a composition bias toward polar residues; sequence GSKQNSDHNNGSF. The residue at position 62 (Ser-62) is a Phosphoserine. The TFIIE beta DNA-binding region spans 67–147; it reads ALSGSSGYKF…YAFKPKYNLK (81 aa). The residue at position 75 (Lys-75) is an N6-acetyllysine. The disordered stretch occupies residues 245 to 277; sequence SMQESGPKKVASIQRRKKPASQKKRRFKTHNEH. The span at 258–272 shows a compositional bias: basic residues; that stretch reads QRRKKPASQKKRRFK.

Belongs to the TFIIE beta subunit family. Tetramer of two alpha and two beta chains. Interacts with FACT subunit SUPT16H. Interacts with ATF7IP. Interacts with SND1. Part of TBP-based Pol II pre-initiation complex (PIC), in which Pol II core assembles with general transcription factors and other specific initiation factors including GTF2E1, GTF2E2, GTF2F1, GTF2F2, TCEA1, ERCC2, ERCC3, GTF2H2, GTF2H3, GTF2H4, GTF2H5, GTF2A1, GTF2A2, GTF2B and TBP; this large multi-subunit PIC complex mediates DNA unwinding and targets Pol II core to the transcription start site where the first phosphodiester bond forms.

The protein localises to the nucleus. Functionally, recruits TFIIH to the initiation complex and stimulates the RNA polymerase II C-terminal domain kinase and DNA-dependent ATPase activities of TFIIH. Both TFIIH and TFIIE are required for promoter clearance by RNA polymerase. The sequence is that of General transcription factor IIE subunit 2 (Gtf2e2) from Mus musculus (Mouse).